Reading from the N-terminus, the 253-residue chain is ATP synthase subunit b 1 (253 aa).

Residues L2–L22 traverse the membrane as a helical segment.

The protein belongs to the ATPase B chain family. F-type ATPases have 2 components, F(1) - the catalytic core - and F(0) - the membrane proton channel. F(1) has five subunits: alpha(3), beta(3), gamma(1), delta(1), epsilon(1). F(0) has four main subunits: a(1), b(2) and c(10-14). The alpha and beta chains form an alternating ring which encloses part of the gamma chain. F(1) is attached to F(0) by a central stalk formed by the gamma and epsilon chains, while a peripheral stalk is formed by the delta and b chains.

It localises to the cell inner membrane. F(1)F(0) ATP synthase produces ATP from ADP in the presence of a proton or sodium gradient. F-type ATPases consist of two structural domains, F(1) containing the extramembraneous catalytic core and F(0) containing the membrane proton channel, linked together by a central stalk and a peripheral stalk. During catalysis, ATP synthesis in the catalytic domain of F(1) is coupled via a rotary mechanism of the central stalk subunits to proton translocation. Its function is as follows. Component of the F(0) channel, it forms part of the peripheral stalk, linking F(1) to F(0). The chain is ATP synthase subunit b 1 from Prosthecochloris aestuarii (strain DSM 271 / SK 413).